The sequence spans 389 residues: S-adenosylmethionine synthase (389 aa).

His-18 lines the ATP pocket. Mg(2+) is bound at residue Asp-20. Glu-46 contacts K(+). L-methionine-binding residues include Glu-59 and Gln-103. A flexible loop region spans residues 103–113 (QSADIAMGVDS). ATP contacts are provided by residues 168–170 (DSK), Asp-244, 250–251 (RK), Ala-267, and Lys-271. Position 244 (Asp-244) interacts with L-methionine. Lys-275 serves as a coordination point for L-methionine.

Belongs to the AdoMet synthase family. In terms of assembly, homotetramer; dimer of dimers. Mg(2+) is required as a cofactor. It depends on K(+) as a cofactor.

The protein resides in the cytoplasm. The enzyme catalyses L-methionine + ATP + H2O = S-adenosyl-L-methionine + phosphate + diphosphate. It participates in amino-acid biosynthesis; S-adenosyl-L-methionine biosynthesis; S-adenosyl-L-methionine from L-methionine: step 1/1. Catalyzes the formation of S-adenosylmethionine (AdoMet) from methionine and ATP. The overall synthetic reaction is composed of two sequential steps, AdoMet formation and the subsequent tripolyphosphate hydrolysis which occurs prior to release of AdoMet from the enzyme. The polypeptide is S-adenosylmethionine synthase (Pelagibacter ubique (strain HTCC1062)).